A 309-amino-acid chain; its full sequence is Ecto-ADP-ribosyltransferase 5 (309 aa).

The N-terminal stretch at 1–23 is a signal peptide; the sequence is MILEDLLMVLSCLSLHALWKVRA. A disulfide bond links C43 and C259. Residues 63–253 form the TR mART core domain; that stretch reads ALLRESWEAA…IVTLWSYDQT (191 aa). Position 100 (Y100) interacts with NAD(+). N102 carries an N-linked (GlcNAc...) asparagine glycan. Residues R161 and Q181 each contribute to the NAD(+) site. R161 is an active-site residue. S184 is a catalytic residue. A glycan (N-linked (GlcNAc...) asparagine) is linked at N197. An NAD(+)-binding site is contributed by S215. The active site involves E222.

It belongs to the Arg-specific ADP-ribosyltransferase family. In terms of tissue distribution, abundantly expressed in testis. Lower levels in cardiac and skeletal muscle.

It localises to the secreted. Its subcellular location is the membrane. The enzyme catalyses L-arginyl-[protein] + NAD(+) = N(omega)-(ADP-D-ribosyl)-L-arginyl-[protein] + nicotinamide + H(+). This chain is Ecto-ADP-ribosyltransferase 5 (Art5), found in Mus musculus (Mouse).